The following is an 835-amino-acid chain: Protein translocase subunit SecA (835 aa).

ATP is bound by residues Q85, 103 to 107 (GEGKT), and D492. Zn(2+) contacts are provided by C819, C821, C830, and C831.

The protein belongs to the SecA family. As to quaternary structure, monomer and homodimer. Part of the essential Sec protein translocation apparatus which comprises SecA, SecYEG and auxiliary proteins SecDF. Other proteins may also be involved. It depends on Zn(2+) as a cofactor.

Its subcellular location is the cell membrane. It is found in the cytoplasm. It carries out the reaction ATP + H2O + cellular proteinSide 1 = ADP + phosphate + cellular proteinSide 2.. Part of the Sec protein translocase complex. Interacts with the SecYEG preprotein conducting channel. Has a central role in coupling the hydrolysis of ATP to the transfer of proteins into and across the cell membrane, serving as an ATP-driven molecular motor driving the stepwise translocation of polypeptide chains across the membrane. The protein is Protein translocase subunit SecA of Clostridium botulinum (strain ATCC 19397 / Type A).